A 436-amino-acid polypeptide reads, in one-letter code: Serine/threonine-protein kinase STK11 (436 aa).

A Phosphoserine modification is found at S31. K44 and K48 each carry N6-acetyllysine. Residues 45–90 are sufficient for interaction with SIRT1; it reads LIGKYLMGDLLGEGSYGKVKEVLDSETLCRRAVKILKKKKLRRIPN. Positions 49–309 constitute a Protein kinase domain; the sequence is YLMGDLLGEG…IRQIRQHSWF (261 aa). ATP-binding positions include 55-63 and K78; that span reads LGEGSYGKV. Residues K96 and K97 each carry the N6-acetyllysine modification. The active-site Proton acceptor is the D176. Residue T189 is modified to Phosphothreonine; by autocatalysis. N6-acetyllysine is present on residues K296 and K311. S325 is modified (phosphoserine). T336 carries the post-translational modification Phosphothreonine; by autocatalysis. The residue at position 366 (T366) is a Phosphothreonine; by ATM and autocatalysis. The segment at 397–421 is disordered; sequence GTEPQLSSKVKPEGRPGAANPARKV. Residue S403 is modified to Phosphoserine. N6-acetyllysine is present on K420. C422 carries the S-palmitoyl cysteine lipid modification. The residue at position 426 (K426) is an N6-acetyllysine. Residue S431 is modified to Phosphoserine; by autocatalysis, PKA, PKC/PRKCZ and RPS6KA1. Cysteine methyl ester is present on C433. The S-farnesyl cysteine moiety is linked to residue C433. K434 is subject to N6-acetyllysine. Positions 434-436 are cleaved as a propeptide — removed in mature form; the sequence is KQQ.

This sequence belongs to the protein kinase superfamily. CAMK Ser/Thr protein kinase family. LKB1 subfamily. Catalytic component of a trimeric complex composed of STK11/LKB1, STRAD (STRADA or STRADB) and CAB39/MO25 (CAB39/MO25alpha or CAB39L/MO25beta): the complex tethers STK11/LKB1 in the cytoplasm and stimulates its catalytic activity. Found in a ternary complex composed of SMAD4, STK11/LKB1 and STK11IP. Interacts with NR4A1, p53/TP53, SMAD4, STK11IP and WDR6. Interacts with NISCH; this interaction may increase STK11 activity. Interacts with SIRT1; the interaction deacetylates STK11. Interacts with CDKN1A. Mg(2+) is required as a cofactor. Mn(2+) serves as cofactor. Phosphorylated by ATM at Thr-366 following ionizing radiation (IR). Phosphorylation at Ser-431 by RPS6KA1 and/or some PKA is required to inhibit cell growth. Phosphorylation at Ser-431 is also required during neuronal polarization to mediate phosphorylation of BRSK1 and BRSK2. Phosphorylation by PKC/PRKCZ at Ser-397 in isoform 2 promotes metformin (or peroxynitrite)-induced nuclear export of STK11 and activation of AMPK. UV radiation -induced phosphorylation at Thr-366 mediates CDKN1A degradation. Post-translationally, acetylated. Deacetylation at Lys-48 enhances cytoplasmic localization and kinase activity in vitro. As to expression, expressed in brain, heart, testis, skeletal muscle and spleen, and weakly in liver and kidney. Isoform 1 is expressed at highest levels in the brain. Isoform 2 is expressed at highest levels in the testis, primarily in postmitotic developing germ cells (at protein level).

The protein resides in the nucleus. The protein localises to the cytoplasm. It localises to the membrane. It is found in the mitochondrion. The enzyme catalyses L-seryl-[protein] + ATP = O-phospho-L-seryl-[protein] + ADP + H(+). The catalysed reaction is L-threonyl-[protein] + ATP = O-phospho-L-threonyl-[protein] + ADP + H(+). With respect to regulation, activated by forming a complex with STRAD (STRADA or STRADB) and CAB39/MO25 (CAB39/MO25alpha or CAB39L/MO25beta): STRADA (or STRADB)-binding promotes a conformational change of STK11/LKB1 in an active conformation, which is stabilized by CAB39/MO25alpha (or CAB39L/MO25beta) interacting with the STK11/LKB1 activation loop. Sequestration in the nucleus by NR4A1 prevents it from phosphorylating and activating cytoplasmic AMPK. In terms of biological role, tumor suppressor serine/threonine-protein kinase that controls the activity of AMP-activated protein kinase (AMPK) family members, thereby playing a role in various processes such as cell metabolism, cell polarity, apoptosis and DNA damage response. Acts by phosphorylating the T-loop of AMPK family proteins, thus promoting their activity: phosphorylates PRKAA1, PRKAA2, BRSK1, BRSK2, MARK1, MARK2, MARK3, MARK4, NUAK1, NUAK2, SIK1, SIK2, SIK3 and SNRK but not MELK. Also phosphorylates non-AMPK family proteins such as STRADA, PTEN and possibly p53/TP53. Acts as a key upstream regulator of AMPK by mediating phosphorylation and activation of AMPK catalytic subunits PRKAA1 and PRKAA2 and thereby regulates processes including: inhibition of signaling pathways that promote cell growth and proliferation when energy levels are low, glucose homeostasis in liver, activation of autophagy when cells undergo nutrient deprivation, and B-cell differentiation in the germinal center in response to DNA damage. Also acts as a regulator of cellular polarity by remodeling the actin cytoskeleton. Required for cortical neuron polarization by mediating phosphorylation and activation of BRSK1 and BRSK2, leading to axon initiation and specification. Involved in DNA damage response: interacts with p53/TP53 and recruited to the CDKN1A/WAF1 promoter to participate in transcription activation. Able to phosphorylate p53/TP53; the relevance of such result in vivo is however unclear and phosphorylation may be indirect and mediated by downstream STK11/LKB1 kinase NUAK1. Also acts as a mediator of p53/TP53-dependent apoptosis via interaction with p53/TP53: translocates to the mitochondrion during apoptosis and regulates p53/TP53-dependent apoptosis pathways. Regulates UV radiation-induced DNA damage response mediated by CDKN1A. In association with NUAK1, phosphorylates CDKN1A in response to UV radiation and contributes to its degradation which is necessary for optimal DNA repair. Its function is as follows. Has a role in spermiogenesis. The chain is Serine/threonine-protein kinase STK11 from Rattus norvegicus (Rat).